The following is a 235-amino-acid chain: Casparian strip membrane protein 2 (235 aa).

The segment at 1–46 is disordered; that stretch reads MSGSDTSGSVHVDEHGHGKASSSYDGAGAPAPAPAPFQGHRKAGSG. Residues 1–67 are Cytoplasmic-facing; that stretch reads MSGSDTSGSV…GSGGDGLRRC (67 aa). Residues 68-88 traverse the membrane as a helical segment; the sequence is LGLIDFVLRVAAFGPTLAAAI. Topologically, residues 89–115 are extracellular; that stretch reads SIGTSDERLSVFTNYFQFRARFDDFPA. Residues 116 to 136 traverse the membrane as a helical segment; that stretch reads FEFFIVANAIAAGYMVLSLPF. Topologically, residues 137-150 are cytoplasmic; that stretch reads SAATIMSSKATGVK. The chain crosses the membrane as a helical span at residues 151-171; the sequence is LLLLICDTIMVGLLTAAASAA. Topologically, residues 172–203 are extracellular; it reads AAMVYVAHEGNLRANWVPICLQFHGFCQRTSG. The chain crosses the membrane as a helical span at residues 204–224; sequence AVIASFLAVFVLMVLIVMAAF. The Cytoplasmic segment spans residues 225 to 235; the sequence is TMPRRTHHTAS.

The protein belongs to the Casparian strip membrane proteins (CASP) family. In terms of assembly, homodimer and heterodimers.

It is found in the cell membrane. Functionally, regulates membrane-cell wall junctions and localized cell wall deposition. Required for establishment of the Casparian strip membrane domain (CSD) and the subsequent formation of Casparian strips, a cell wall modification of the root endodermis that determines an apoplastic barrier between the intraorganismal apoplasm and the extraorganismal apoplasm and prevents lateral diffusion. This is Casparian strip membrane protein 2 from Oryza sativa subsp. indica (Rice).